The primary structure comprises 293 residues: D-alanine--D-alanine ligase (293 aa).

Residues 98-291 enclose the ATP-grasp domain; sequence KIIWKQHNLT…FNKLVVAIIN (194 aa). 124–177 is an ATP binding site; sequence DFPLPWMVKPTLEGSSIGISKVDSQIQLNNALMLAWQYNSHALIEQWIEGDEYT. Mg(2+) contacts are provided by Asp-245, Glu-258, and Asn-260.

Belongs to the D-alanine--D-alanine ligase family. The cofactor is Mg(2+). It depends on Mn(2+) as a cofactor.

The protein resides in the cytoplasm. The catalysed reaction is 2 D-alanine + ATP = D-alanyl-D-alanine + ADP + phosphate + H(+). Its pathway is cell wall biogenesis; peptidoglycan biosynthesis. In terms of biological role, cell wall formation. This chain is D-alanine--D-alanine ligase, found in Ruthia magnifica subsp. Calyptogena magnifica.